The following is a 553-amino-acid chain: Dihydroxy-acid dehydratase (553 aa).

Asp78 contacts Mg(2+). Position 119 (Cys119) interacts with [2Fe-2S] cluster. Mg(2+)-binding residues include Asp120 and Lys121. At Lys121 the chain carries N6-carboxylysine. Position 193 (Cys193) interacts with [2Fe-2S] cluster. Residue Glu441 coordinates Mg(2+). Ser467 acts as the Proton acceptor in catalysis.

The protein belongs to the IlvD/Edd family. As to quaternary structure, homodimer. Requires [2Fe-2S] cluster as cofactor. Mg(2+) serves as cofactor.

It catalyses the reaction (2R)-2,3-dihydroxy-3-methylbutanoate = 3-methyl-2-oxobutanoate + H2O. The catalysed reaction is (2R,3R)-2,3-dihydroxy-3-methylpentanoate = (S)-3-methyl-2-oxopentanoate + H2O. The protein operates within amino-acid biosynthesis; L-isoleucine biosynthesis; L-isoleucine from 2-oxobutanoate: step 3/4. Its pathway is amino-acid biosynthesis; L-valine biosynthesis; L-valine from pyruvate: step 3/4. In terms of biological role, functions in the biosynthesis of branched-chain amino acids. Catalyzes the dehydration of (2R,3R)-2,3-dihydroxy-3-methylpentanoate (2,3-dihydroxy-3-methylvalerate) into 2-oxo-3-methylpentanoate (2-oxo-3-methylvalerate) and of (2R)-2,3-dihydroxy-3-methylbutanoate (2,3-dihydroxyisovalerate) into 2-oxo-3-methylbutanoate (2-oxoisovalerate), the penultimate precursor to L-isoleucine and L-valine, respectively. The protein is Dihydroxy-acid dehydratase of Trichlorobacter lovleyi (strain ATCC BAA-1151 / DSM 17278 / SZ) (Geobacter lovleyi).